Consider the following 668-residue polypeptide: Auxilin-like clathrin uncoating factor SWA2 (668 aa).

The disordered stretch occupies residues 1 to 95 (MSDPFAHLLT…ANNTPPSALA (95 aa)). Residues 1–100 (MSDPFAHLLT…PSALANTDDD (100 aa)) form a CB1 region. A compositionally biased stretch (polar residues) spans 17 to 36 (SASASKETTPQSSNSPSITG). A phosphoserine mark is found at Ser52 and Ser64. Positions 76–92 (PTNSTTKSNTANNTPPS) are enriched in low complexity. Positions 140-180 (DEVKDMEIARLMSLGLSIEEATEFYENDVTYERYLEILKSK) constitute a UBA domain. The tract at residues 238–302 (EANDRLNNYS…FETKIDITKR (65 aa)) is CB2. A phosphoserine mark is found at Ser264, Ser308, and Ser312. Disordered regions lie at residues 302–323 (RTAP…EENS) and 339–359 (EGNL…ENSN). Residues 303 to 362 (TAPDVSHSSSPTSGILIEENSRRNEPLIEDSLLDFSEGNLTNSKSNEDSTLFNENSNTDS) are CB3. Polar residues predominate over residues 340-359 (GNLTNSKSNEDSTLFNENSN). 3 TPR repeats span residues 374–407 (YNEF…LPLN), 412–445 (IIAL…FPSS), and 467–500 (PKIM…NFFD). A disordered region spans residues 511–556 (QDFINPPPVKKSMPVKKKTTTTSPATKKQNLTASSSNSPISVDSTS). A compositionally biased stretch (polar residues) spans 539 to 555 (QNLTASSSNSPISVDST). Residues 603–668 (CNWKDVSMQD…DKFKLQNDIN (66 aa)) form the J domain.

In terms of assembly, interacts with the clathrin light and heavy chains CLC1 and CHC1, respectively. Binds to clathrin with its N-terminal domain containing 3 clathrin-binding (CB) motifs. Association with clathrin is transient. Binds to polyubiquitin and ubiquitinated proteins.

The protein resides in the cytoplasm. Its subcellular location is the endoplasmic reticulum membrane. Cofactor for the uncoating of clathrin-coated vesicles (CCVs) by Hsp70-type chaperones (SSA1/2/3 and SSB1/2). Coat disassembly is important for fusion of vesicles with target membranes and for recycling components of clathrin coats to the cytoplasm for further rounds of vesicle formation. Binds to assembled clathrin and recruits the ATP-activated chaperone to CCVs. Stimulates the ATPase activity of the clathrin-associated Hsp70-type chaperone SSA1, which then disrupts clathrin-clathrin interactions, leading to release of the clathrin coat. In addition, prevents unproductive clathrin assembly in the cell. Also required for cortical endoplasmic reticulum inheritance. This chain is Auxilin-like clathrin uncoating factor SWA2 (SWA2), found in Saccharomyces cerevisiae (strain ATCC 204508 / S288c) (Baker's yeast).